The chain runs to 482 residues: Mannan endo-1,4-beta-mannosidase (482 aa).

The N-terminal stretch at M1–A21 is a signal peptide. In terms of domain architecture, CBM6 spans T42–T160. Residues N171 and N300 are each glycosylated (N-linked (GlcNAc...) asparagine). In terms of domain architecture, GH26 spans A181–D474. E332 serves as the catalytic Proton donor. The active-site Nucleophile is the E422.

Belongs to the glycosyl hydrolase 26 family.

The protein resides in the secreted. With respect to regulation, the activity is completely impaired by Ag(+), partially inhibited by Zn(2+), and enhanced by Co(2+), Ni(2+) and Cu(2+) by 22.6, 14.5 and 20.8 %, respectively. Ca(2+), Na(+), Mg(2+), Mn(2+), urea and EDTA do not significantly affect the mannanase activity. Functionally, mannan endo-1,4-beta-mannosidase that exhibits high activity against konjac glucomannan and carob galactomannan, as well as a lower activity toward beta-mannan. Shows no activity against barley beta-glucan, birchwood xylan, and low viscosity carboxymethyl cellulose (CMC). Has the ability to hydrolyze manno-oligosaccharides such as M4 which is degraded slightly to M3 and M1, M5 which is mainly degraded to M4 and M1, and M6 which is mostly hydrolyzed to M4 and M2. Shows no activity toward M2 and M3 manno-oligosaccharides. The polypeptide is Mannan endo-1,4-beta-mannosidase (Thermothelomyces thermophilus (strain ATCC 42464 / BCRC 31852 / DSM 1799) (Sporotrichum thermophile)).